The sequence spans 74 residues: U4-theraphotoxin-Cg1a (74 aa).

The N-terminal stretch at 1 to 19 (MNATIFALLLLLNLAMYNA) is a signal peptide. Residues 20–39 (AEQSSETDMDDTLLIPEINR) constitute a propeptide that is removed on maturation. Cystine bridges form between Cys-42–Cys-56, Cys-49–Cys-61, and Cys-55–Cys-71.

Belongs to the neurotoxin 36 family. 01 subfamily. In terms of tissue distribution, expressed by the venom gland.

Its subcellular location is the secreted. Its function is as follows. Probable ion channel inhibitor. The protein is U4-theraphotoxin-Cg1a of Chilobrachys guangxiensis (Chinese earth tiger tarantula).